The primary structure comprises 283 residues: MAHLGAHFAFRSRWQKTDDELCRHSMSFILHKAIRNDFFQSYLYLLEKIPLVKLYALTSQVIDGEMQFYARAKLFYQEVPATEEGMMGNFIELSNPDIQASREFLRKFVGGPGRAGTGCALDCGSGIGRVSKHVLLPVFSSVELVDMMESFLLEAQSYLQVNEDKVESYHCYSLQEFTPHLGRYDVIWIQWVSGYLTDKDLLAFLSRCRDGLKENGVIILKDNVAREGCIFDLSDSSVTRDMDILRSLIRKSGLVVLGQEKQEGFPEQCVPVWMFALHSDRHS.

Residues Gly124, Arg129, Asp146, 174 to 175, and Gln190 contribute to the S-adenosyl-L-methionine site; that span reads LQ.

It belongs to the methyltransferase superfamily. NTM1 family.

Its subcellular location is the nucleus. It carries out the reaction N-terminal L-alanyl-L-prolyl-L-lysyl-[protein] + S-adenosyl-L-methionine = N-terminal N-methyl-L-alanyl-L-prolyl-L-lysyl-[protein] + S-adenosyl-L-homocysteine + H(+). The enzyme catalyses N-terminal L-prolyl-L-prolyl-L-lysyl-[protein] + S-adenosyl-L-methionine = N-terminal N-methyl-L-prolyl-L-prolyl-L-lysyl-[protein] + S-adenosyl-L-homocysteine + H(+). The catalysed reaction is N-terminal L-seryl-L-prolyl-L-lysyl-[protein] + S-adenosyl-L-methionine = N-terminal N-methyl-L-seryl-L-prolyl-L-lysyl-[protein] + S-adenosyl-L-homocysteine + H(+). In terms of biological role, alpha N-methyltransferase that methylates the N-terminus of target proteins containing the N-terminal motif [Ala/Pro/Ser]-Pro-Lys when the initiator Met is cleaved. Specifically catalyzes monomethylation of exposed alpha-amino group of Ala or Ser residue in the [Ala/Ser]-Pro-Lys motif and Pro in the Pro-Pro-Lys motif. Predominantly functions as a mono-methyltransferase but is also able to di-/tri-methylate the GPKRIA peptide and di-methylate the PPKRIA peptide (in vitro). May activate NTMT1 by priming its substrates for trimethylation. The polypeptide is N-terminal Xaa-Pro-Lys N-methyltransferase 2 (Ntmt2) (Mus musculus (Mouse)).